A 470-amino-acid polypeptide reads, in one-letter code: 3-isopropylmalate dehydratase large subunit (470 aa).

[4Fe-4S] cluster is bound by residues cysteine 349, cysteine 409, and cysteine 412.

This sequence belongs to the aconitase/IPM isomerase family. LeuC type 1 subfamily. In terms of assembly, heterodimer of LeuC and LeuD. [4Fe-4S] cluster is required as a cofactor.

The catalysed reaction is (2R,3S)-3-isopropylmalate = (2S)-2-isopropylmalate. It participates in amino-acid biosynthesis; L-leucine biosynthesis; L-leucine from 3-methyl-2-oxobutanoate: step 2/4. Its function is as follows. Catalyzes the isomerization between 2-isopropylmalate and 3-isopropylmalate, via the formation of 2-isopropylmaleate. The polypeptide is 3-isopropylmalate dehydratase large subunit (Campylobacter jejuni subsp. jejuni serotype O:2 (strain ATCC 700819 / NCTC 11168)).